An 803-amino-acid chain; its full sequence is Mastermind-like domain-containing protein 1 (803 aa).

Disordered stretches follow at residues 22 to 50, 292 to 374, 420 to 452, and 486 to 641; these read NRQE…TGMA, LAAS…APSS, GHLI…QQSF, and QQQQ…PDQS. The segment covering 296 to 309 has biased composition (polar residues); that stretch reads KQGSATKQGSNRNW. Over residues 312 to 340 the composition is skewed to pro residues; that stretch reads LPPPGLSPPYLPVPSPHPPPPQPPPPPFS. Residues 347 to 362 are compositionally biased toward low complexity; that stretch reads SCMSSSSLSGSAVQSS. Polar residues-rich tracts occupy residues 363–374, 441–452, 495–526, and 547–564; these read PNALLSSMAPSS, NLSSPGLPQQSF, HQAN…SSSP, and PSPQ…QSSL. Residues 571-588 show a composition bias toward low complexity; the sequence is ATPAHAPSATASSTATAT. The span at 592–622 shows a compositional bias: basic residues; the sequence is QHHHQQHHHQQHHHQQQHHQQQHHQQHHHQQ. The span at 623 to 641 shows a compositional bias: low complexity; that stretch reads QQHQQQQHQQQQQQQPDQS.

The protein belongs to the mastermind family.

Its subcellular location is the nucleus. Its function is as follows. Transactivates the HES3 promoter independently of NOTCH proteins. HES3 is a non-canonical NOTCH target gene which lacks binding sites for RBPJ. Required for testosterone production. This Mus musculus (Mouse) protein is Mastermind-like domain-containing protein 1 (Mamld1).